Here is a 716-residue protein sequence, read N- to C-terminus: Leucine-rich repeat neuronal protein 1 (716 aa).

Positions 1 to 25 are cleaved as a signal peptide; it reads MARMSFVIAACQLVLGLLMTSLTES. Residues 26–72 enclose the LRRNT domain; that stretch reads SIQNSECPQLCVCEIRPWFTPQSTYREATTVDCNDLRLTRIPSNLSS. The Extracellular portion of the chain corresponds to 26–631; sequence SIQNSECPQL…DISDQETSTA (606 aa). LRR repeat units follow at residues 73–95, 96–117, 120–141, 144–165, 168–189, 192–213, 216–237, 240–261, 264–285, 313–335, and 338–359; these read DTQV…QQLF, NLTE…GLAN, QLTT…CLQD, NLQE…AFAG, NLLR…WFDS, NLEI…NFKP, NLRS…ALVG, SLES…ALQK, NLKF…DFKN, ELTK…AFRS, and ALES…TVES. Residues N96 and N117 are each glycosylated (N-linked (GlcNAc...) asparagine). Positions 371-424 constitute an LRRCT domain; sequence NPLRCDCVIHWINSNKTNIRFMEPLSMFCAMPPEYKGHQVKEVLIQDSSEQCLP. An N-linked (GlcNAc...) asparagine glycan is attached at N385. The Ig-like C2-type domain maps to 424 to 515; the sequence is PMISHDSFPN…GADTRVATIK (92 aa). C447 and C499 form a disulfide bridge. N517 is a glycosylation site (N-linked (GlcNAc...) asparagine). In terms of domain architecture, Fibronectin type-III spans 525-617; that stretch reads QVLKIYVKQT…SCVNVTTKNA (93 aa). Residues 632-652 traverse the membrane as a helical segment; that stretch reads LAAVMGSMFAVISLASIAVYF. Residues 653–716 lie on the Cytoplasmic side of the membrane; that stretch reads AKRFKRKNYH…VDTSRSYYMW (64 aa). Positions 691 to 700 are enriched in basic and acidic residues; it reads DSEKDKDGSA. Residues 691–716 are disordered; it reads DSEKDKDGSADTKPTQVDTSRSYYMW. Polar residues predominate over residues 702 to 716; sequence TKPTQVDTSRSYYMW.

It localises to the membrane. This chain is Leucine-rich repeat neuronal protein 1 (LRRN1), found in Homo sapiens (Human).